Reading from the N-terminus, the 396-residue chain is Elongation factor Tu (396 aa).

Residues Lys10–Glu206 enclose the tr-type G domain. The segment at Gly19 to Thr26 is G1. A GTP-binding site is contributed by Gly19–Thr26. Mg(2+) is bound at residue Thr26. A G2 region spans residues Gly60 to Ser64. The tract at residues Asp81–Gly84 is G3. GTP is bound by residues Asp81–His85 and Asn136–Asp139. The tract at residues Asn136–Asp139 is G4. The segment at Ser174–Leu176 is G5.

This sequence belongs to the TRAFAC class translation factor GTPase superfamily. Classic translation factor GTPase family. EF-Tu/EF-1A subfamily. In terms of assembly, monomer.

The protein resides in the cytoplasm. The enzyme catalyses GTP + H2O = GDP + phosphate + H(+). In terms of biological role, GTP hydrolase that promotes the GTP-dependent binding of aminoacyl-tRNA to the A-site of ribosomes during protein biosynthesis. The protein is Elongation factor Tu of Bradyrhizobium diazoefficiens (strain JCM 10833 / BCRC 13528 / IAM 13628 / NBRC 14792 / USDA 110).